The sequence spans 306 residues: Pantothenate kinase (306 aa).

91-98 provides a ligand contact to ATP; it reads GSVAVGKS.

The protein belongs to the prokaryotic pantothenate kinase family.

The protein localises to the cytoplasm. The enzyme catalyses (R)-pantothenate + ATP = (R)-4'-phosphopantothenate + ADP + H(+). Its pathway is cofactor biosynthesis; coenzyme A biosynthesis; CoA from (R)-pantothenate: step 1/5. This Streptococcus pneumoniae serotype 4 (strain ATCC BAA-334 / TIGR4) protein is Pantothenate kinase (coaA).